Here is a 99-residue protein sequence, read N- to C-terminus: SAGA-associated factor 11 (99 aa).

Residues 71–92 (IHCENCGRDVSANRLAAHLQRC) form an SGF11-type zinc finger.

It belongs to the SGF11 family. Component of the 1.8 MDa SAGA transcription coactivator-HAT complex. SAGA is built of 5 distinct domains with specialized functions. Within the SAGA complex, SUS1, SGF11, SGF73 and UBP8 form an additional subcomplex of SAGA called the DUB module (deubiquitination module). Interacts directly with SGF73, SUS1 and UBP8.

It is found in the nucleus. Its function is as follows. Functions as a component of the transcription regulatory histone acetylation (HAT) complex SAGA. At the promoters, SAGA is required for recruitment of the basal transcription machinery. It influences RNA polymerase II transcriptional activity through different activities such as TBP interaction and promoter selectivity, interaction with transcription activators, and chromatin modification through histone acetylation and deubiquitination. SAGA acetylates nucleosomal histone H3 to some extent (to form H3K9ac, H3K14ac, H3K18ac and H3K23ac). SAGA interacts with DNA via upstream activating sequences (UASs). Involved in transcriptional regulation of a subset of SAGA-regulated genes. Within the SAGA complex, participates in a subcomplex, that specifically deubiquitinates histones H2B. The protein is SAGA-associated factor 11 of Saccharomyces cerevisiae (strain YJM789) (Baker's yeast).